The primary structure comprises 176 residues: Crossover junction endodeoxyribonuclease RuvC (176 aa).

Catalysis depends on residues Asp-7, Glu-67, and Asp-139. Positions 7, 67, and 139 each coordinate Mg(2+).

The protein belongs to the RuvC family. In terms of assembly, homodimer which binds Holliday junction (HJ) DNA. The HJ becomes 2-fold symmetrical on binding to RuvC with unstacked arms; it has a different conformation from HJ DNA in complex with RuvA. In the full resolvosome a probable DNA-RuvA(4)-RuvB(12)-RuvC(2) complex forms which resolves the HJ. Mg(2+) is required as a cofactor.

The protein localises to the cytoplasm. It catalyses the reaction Endonucleolytic cleavage at a junction such as a reciprocal single-stranded crossover between two homologous DNA duplexes (Holliday junction).. The RuvA-RuvB-RuvC complex processes Holliday junction (HJ) DNA during genetic recombination and DNA repair. Endonuclease that resolves HJ intermediates. Cleaves cruciform DNA by making single-stranded nicks across the HJ at symmetrical positions within the homologous arms, yielding a 5'-phosphate and a 3'-hydroxyl group; requires a central core of homology in the junction. The consensus cleavage sequence is 5'-(A/T)TT(C/G)-3'. Cleavage occurs on the 3'-side of the TT dinucleotide at the point of strand exchange. HJ branch migration catalyzed by RuvA-RuvB allows RuvC to scan DNA until it finds its consensus sequence, where it cleaves and resolves the cruciform DNA. The protein is Crossover junction endodeoxyribonuclease RuvC of Pelobacter propionicus (strain DSM 2379 / NBRC 103807 / OttBd1).